The following is a 398-amino-acid chain: Mannitol-1-phosphate 5-dehydrogenase (398 aa).

10–21 (AVHFGAGNIGRG) serves as a coordination point for NAD(+). The active site involves lysine 221.

The protein belongs to the mannitol dehydrogenase family. As to quaternary structure, monomer.

It catalyses the reaction D-mannitol 1-phosphate + NAD(+) = beta-D-fructose 6-phosphate + NADH + H(+). Functionally, catalyzes the NAD(H)-dependent interconversion of D-fructose 6-phosphate and D-mannitol 1-phosphate in the mannitol metabolic pathway. The chain is Mannitol-1-phosphate 5-dehydrogenase from Neurospora crassa (strain ATCC 24698 / 74-OR23-1A / CBS 708.71 / DSM 1257 / FGSC 987).